A 335-amino-acid chain; its full sequence is Phospho-N-acetylmuramoyl-pentapeptide-transferase (335 aa).

Transmembrane regions (helical) follow at residues 3–23 (LTIL…PHFI), 53–73 (GGTV…LVYF), 78–98 (SLGL…IGFL), 118–138 (FTFQ…PSGI), 143–163 (VFGY…FWVV), 174–194 (GIDG…GVIA), 200–220 (FDVL…FLFN), 226–246 (IFMG…ISIA), 251–271 (WTLL…MLQV), and 314–334 (VDAF…AILY).

Belongs to the glycosyltransferase 4 family. MraY subfamily. It depends on Mg(2+) as a cofactor.

It is found in the cell membrane. The enzyme catalyses UDP-N-acetyl-alpha-D-muramoyl-L-alanyl-gamma-D-glutamyl-L-lysyl-D-alanyl-D-alanine + di-trans,octa-cis-undecaprenyl phosphate = Mur2Ac(oyl-L-Ala-gamma-D-Glu-L-Lys-D-Ala-D-Ala)-di-trans,octa-cis-undecaprenyl diphosphate + UMP. It participates in cell wall biogenesis; peptidoglycan biosynthesis. Its function is as follows. Catalyzes the initial step of the lipid cycle reactions in the biosynthesis of the cell wall peptidoglycan: transfers peptidoglycan precursor phospho-MurNAc-pentapeptide from UDP-MurNAc-pentapeptide onto the lipid carrier undecaprenyl phosphate, yielding undecaprenyl-pyrophosphoryl-MurNAc-pentapeptide, known as lipid I. This Streptococcus equi subsp. equi (strain 4047) protein is Phospho-N-acetylmuramoyl-pentapeptide-transferase.